Consider the following 234-residue polypeptide: Prolactin-6A1 (234 aa).

The first 33 residues, 1–33 (MVKSWLRMSKKMEAGTLLMLLMSNILLWENVAS), serve as a signal peptide directing secretion. N-linked (GlcNAc...) asparagine glycosylation occurs at Asn-61. 2 disulfides stabilise this stretch: Cys-93–Cys-209 and Cys-226–Cys-234.

It belongs to the somatotropin/prolactin family.

The protein localises to the secreted. The sequence is that of Prolactin-6A1 (Prl6a1) from Rattus norvegicus (Rat).